A 542-amino-acid polypeptide reads, in one-letter code: Doublesex- and mab-3-related transcription factor A2 (542 aa).

Positions 70-117 (CARCRNHGVVSALKGHKRYCRWKDCLCAKCTLIAERQRVMAAQVALRR) form a DNA-binding region, DM. The tract at residues 201-316 (LQAGRPGSPL…GGSGPRQRTP (116 aa)) is disordered. The DMA domain maps to 314 to 349 (RTPLDILTRVFPGHRRGVLELVLQGCGGDVVQAIEQ).

The protein belongs to the DMRT family. Expressed in testis.

The protein resides in the nucleus. May be involved in sexual development. This chain is Doublesex- and mab-3-related transcription factor A2 (DMRTA2), found in Homo sapiens (Human).